The chain runs to 300 residues: Sporulation protein SPS18 (300 aa).

Residues Glu11–Ile130 enclose the Arf-GAP domain. A C4-type zinc finger spans residues Cys28 to Cys51.

The chain is Sporulation protein SPS18 (SPS18) from Saccharomyces cerevisiae (strain ATCC 204508 / S288c) (Baker's yeast).